The chain runs to 718 residues: K(+)-insensitive pyrophosphate-energized proton pump (718 aa).

6 helical membrane passes run 6–26 (AVLV…IWAI), 54–76 (LTRQ…WYLL), 81–103 (AIGF…HVSV), 112–132 (AASL…AITG), 133–153 (LLVA…LTVW), and 168–188 (VSLG…GGIF). Lys190 contacts substrate. Mg(2+) contacts are provided by Asp193, Asp197, Asn220, and Asp223. 6 helical membrane-spanning segments follow: residues 240 to 260 (AVTV…SDIL), 265 to 285 (LYPL…TFFV), 300 to 320 (GLIA…TLTV), 335 to 355 (GTNL…IVVI), 385 to 405 (GLAV…GGII), and 413 to 433 (LFGT…IVAL). Mg(2+) is bound at residue Asp441. 4 consecutive transmembrane segments (helical) span residues 472 to 492 (AVTK…LFAA), 524 to 544 (YVVA…GMAM), 593 to 613 (IIPS…VLLI), and 620 to 640 (AFAA…FVAI). Ca(2+)-binding residues include Asp650, Asp682, and Asp686. A substrate-binding site is contributed by Lys689. Residues 695–715 (AVNPAIKITNIVALLLLAVLA) traverse the membrane as a helical segment.

It belongs to the H(+)-translocating pyrophosphatase (TC 3.A.10) family. K(+)-insensitive subfamily. In terms of assembly, homodimer. Mg(2+) serves as cofactor.

The protein localises to the cell inner membrane. The enzyme catalyses diphosphate + H2O + H(+)(in) = 2 phosphate + 2 H(+)(out). Its function is as follows. Proton pump that utilizes the energy of pyrophosphate hydrolysis as the driving force for proton movement across the membrane. Generates a proton motive force. The sequence is that of K(+)-insensitive pyrophosphate-energized proton pump from Brucella anthropi (strain ATCC 49188 / DSM 6882 / CCUG 24695 / JCM 21032 / LMG 3331 / NBRC 15819 / NCTC 12168 / Alc 37) (Ochrobactrum anthropi).